A 5628-amino-acid polypeptide reads, in one-letter code: Polyketide synthase ThaG (5628 aa).

Positions 13–448 (HDDIAVIGIA…GTNAHVVLRE (436 aa)) constitute a Ketosynthase family 3 (KS3) 1 domain. Catalysis depends on for beta-ketoacyl synthase 1 activity residues C184, H319, and H361. 2 disordered regions span residues 552–613 (GNLV…DGPT) and 1156–1183 (ASPG…RAEA). Residues 559–589 (GPHDEQADHDGSGEHGEHGERARAGADDLSR) are compositionally biased toward basic and acidic residues. Over residues 1156-1173 (ASPGAASSGAAAPNAASD) the composition is skewed to low complexity. A compositionally biased stretch (basic and acidic residues) spans 1174 to 1183 (ASRDTERAEA). The region spanning 1209–1286 (AHGSARLPAL…RLAGHLATRL (78 aa)) is the Carrier 1 domain. S1246 carries the O-(pantetheine 4'-phosphoryl)serine modification. The region spanning 1373-1781 (YEPIAIVGMS…GTNAHVIVEA (409 aa)) is the Ketosynthase family 3 (KS3) 2 domain. Catalysis depends on for beta-ketoacyl synthase 2 activity residues C1529, H1664, and H1704. Residues 1967–2099 (AREPGARERA…GVVDELNEPA (133 aa)) form an N-terminal hotdog fold 1 region. One can recognise a PKS/mFAS DH 1 domain in the interval 1967 to 2261 (AREPGARERA…SARWRKLAGA (295 aa)). Catalysis depends on H1999, which acts as the Proton acceptor; for dehydratase activity 1. The segment at 2113–2261 (AGERVDGAAL…SARWRKLAGA (149 aa)) is C-terminal hotdog fold 1. The active-site Proton donor; for dehydratase activity 1 is the D2175. Residues 2426-2446 (DADEDDRDGREPAGGPPLRDD) form a disordered region. One can recognise a Carrier 2 domain in the interval 2702–2780 (PAARVDLHAL…AIARALDASA (79 aa)). The segment at 2817 to 2836 (TPPDAGAPQRGAHAAAAEGS) is disordered. A compositionally biased stretch (low complexity) spans 2822–2835 (GAPQRGAHAAAAEG). Residues 2862-2935 (ARVGARLSAL…ELTDYFVRRH (74 aa)) form the Carrier 3 domain. An O-(pantetheine 4'-phosphoryl)serine modification is found at S2896. A Ketosynthase family 3 (KS3) 3 domain is found at 3005 to 3430 (ADAIAVIGLA…GANAHVIVRE (426 aa)). Active-site for beta-ketoacyl synthase 3 activity residues include C3175, H3310, and H3351. The tract at residues 3526–3546 (PGKKQLRGNGRARRGDAPPAG) is disordered. The segment at 3621–3743 (HPMLDANRSE…GRSPSRAARG (123 aa)) is N-terminal hotdog fold 2. A PKS/mFAS DH 2 domain is found at 3621-3895 (HPMLDANRSE…SRAAASWRTA (275 aa)). The active-site Proton acceptor; for dehydratase activity 2 is H3650. The tract at residues 3758–3895 (RAAPAFDADA…SRAAASWRTA (138 aa)) is C-terminal hotdog fold 2. Residue D3818 is the Proton donor; for dehydratase activity 2 of the active site. The segment at 3917-3942 (PAAESPSAATSTSAATSPAISTSAAT) is disordered. In terms of domain architecture, Carrier 4 spans 4840-4914 (TRTAALLRSL…ALAAYVGSQL (75 aa)). At S4874 the chain carries O-(pantetheine 4'-phosphoryl)serine. A disordered region spans residues 4960-4992 (APRARTGADAPDTSLASSASSISSARASSPASP). The Ketosynthase family 3 (KS3) 4 domain occupies 4998-5424 (SFDVAIVGAS…GVNAHVVLEE (427 aa)). Residues C5158, H5293, and H5339 each act as for beta-ketoacyl synthase 4 activity in the active site. The Carrier 5 domain maps to 5470-5544 (ARIEAVIRDA…ALRDHVAERI (75 aa)). At S5504 the chain carries O-(pantetheine 4'-phosphoryl)serine. Residues 5573–5603 (VSEATEASDASEASDASEASEASEASEASKA) form a disordered region.

Pantetheine 4'-phosphate serves as cofactor.

The protein resides in the cytoplasm. It participates in antibiotic biosynthesis. Involved in production of the polyketide antibiotic thailandamide. The sequence is that of Polyketide synthase ThaG from Burkholderia thailandensis (strain ATCC 700388 / DSM 13276 / CCUG 48851 / CIP 106301 / E264).